The sequence spans 63 residues: SSWQKAGISFNKYLAIAARTVQRSLKNDLKVAAEKRYISDAKVQKLEKGNVVSTTDLASNKSA.

F-type ATP synthases have 2 components, the catalytic core F(1) and the membrane-embedded component F(0), linked together by a central stalk and a peripheral stalk. The central stalk, also called rotor shaft, is often seen as part of F(1). The peripheral stalk is seen as part of F(0). F(0) contains the membrane channel next to the rotor. F-type ATP synthases form dimers but each monomer functions independently in ATP generation. The dimer consists of 18 different polypeptides: ATP1 (subunit alpha, part of F(1), 3 molecules per monomer), ATP2 (subunit beta, part of F(1), 3 molecules per monomer), ATP3 (subunit gamma, part of the central stalk), ATP4 (subunit b, part of the peripheral stalk), ATP5/OSCP (subunit 5/OSCP, part of the peripheral stalk), ATP6 (subunit a, part of the peripheral stalk), ATP7 (subunit d, part of the peripheral stalk), ATP8 (subunit 8, part of the peripheral stalk), OLI1 (subunit c, part of the rotor, 10 molecules per monomer), ATP14 (subunit h, part of the peripheral stalk), ATP15 (subunit epsilon, part of the central stalk), ATP16 (subunit delta, part of the central stalk), ATP17 (subunit f, part of the peripheral stalk), ATP18 (subunit i/j, part of the peripheral stalk). Dimer-specific subunits are ATP19 (subunit k, at interface between monomers), ATP20 (subunit g, at interface between monomers), TIM11 (subunit e, at interface between monomers). Also contains subunit L.

The protein localises to the mitochondrion inner membrane. Functionally, mitochondrial membrane ATP synthase (F(1)F(0) ATP synthase or Complex V) produces ATP from ADP in the presence of a proton gradient across the membrane which is generated by electron transport complexes of the respiratory chain. F-type ATP synthases consist of two structural domains, F(1) - containing the extramembraneous catalytic core, and F(0) - containing the membrane proton channel, linked together by a central stalk and a peripheral stalk. During catalysis, ATP synthesis in the catalytic domain of F(1) is coupled via a rotary mechanism of the central stalk subunits to proton translocation. Part of the complex F(1) domain and the central stalk which is part of the complex rotary element. Rotation of the central stalk against the surrounding alpha/ATP1(3)beta/ATP2(3) subunits leads to hydrolysis of ATP in three separate catalytic sites on the beta/ATP2 subunits. This is ATP synthase subunit epsilon, mitochondrial from Pichia angusta (Yeast).